The chain runs to 410 residues: 2-oxoglutarate-dependent dioxygenase AOP3 (410 aa).

In terms of domain architecture, Fe2OG dioxygenase spans 258–355 (GNASVGAKEA…RYAAALFSNP (98 aa)). Residues His-278, Asp-280, and His-335 each coordinate Fe cation. Arg-346 contacts 2-oxoglutarate.

Belongs to the iron/ascorbate-dependent oxidoreductase family. The cofactor is Fe(2+).

In terms of biological role, 2-oxoglutarate-dependent dioxygenase involved in glucosinolates biosynthesis. Catalyzes the conversion of methylsulfinylalkyl glucosinolates to hydroxyalkyl glucosinolates. This is 2-oxoglutarate-dependent dioxygenase AOP3 (AOP3) from Arabidopsis thaliana (Mouse-ear cress).